Consider the following 384-residue polypeptide: 1-deoxy-D-xylulose 5-phosphate reductoisomerase (384 aa).

Residues Thr-10, Gly-11, Ser-12, Ile-13, Gly-36, and Asn-122 each contribute to the NADPH site. 1-deoxy-D-xylulose 5-phosphate is bound at residue Lys-123. Position 124 (Glu-124) interacts with NADPH. Asp-148 serves as a coordination point for Mn(2+). 1-deoxy-D-xylulose 5-phosphate contacts are provided by Ser-149, Glu-150, Ser-174, and His-197. Residue Glu-150 participates in Mn(2+) binding. Gly-203 contacts NADPH. 1-deoxy-D-xylulose 5-phosphate-binding residues include Ser-210, Asn-215, Lys-216, and Glu-219. Mn(2+) is bound at residue Glu-219.

This sequence belongs to the DXR family. The cofactor is Mg(2+). Mn(2+) is required as a cofactor.

It carries out the reaction 2-C-methyl-D-erythritol 4-phosphate + NADP(+) = 1-deoxy-D-xylulose 5-phosphate + NADPH + H(+). It participates in isoprenoid biosynthesis; isopentenyl diphosphate biosynthesis via DXP pathway; isopentenyl diphosphate from 1-deoxy-D-xylulose 5-phosphate: step 1/6. Its function is as follows. Catalyzes the NADPH-dependent rearrangement and reduction of 1-deoxy-D-xylulose-5-phosphate (DXP) to 2-C-methyl-D-erythritol 4-phosphate (MEP). This is 1-deoxy-D-xylulose 5-phosphate reductoisomerase from Chlorobium phaeobacteroides (strain DSM 266 / SMG 266 / 2430).